Reading from the N-terminus, the 377-residue chain is Guanine nucleotide-binding protein subunit alpha-13 (377 aa).

Residues Cys14 and Cys18 are each lipidated (S-palmitoyl cysteine). The 331-residue stretch at 47–377 (RLVKILLLGA…HDNLKQLMLQ (331 aa)) folds into the G-alpha domain. Positions 50–63 (KILLLGAGESGKST) are G1 motif. Residues 58–63 (ESGKST), Ser173, and 197–200 (LLAR) contribute to the GTP site. Ser62 contacts Mg(2+). Residues 195–203 (DILLARRPT) form a G2 motif region. Thr203 contributes to the Mg(2+) binding site. The residue at position 203 (Thr203) is a Phosphothreonine; by PKA. Residues 218-227 (FKMVDVGGQR) form a G3 motif region. Residues 287–294 (ILFLNKTD) form a G4 motif region. GTP-binding positions include 291-294 (NKTD) and Ala349. Positions 347–352 (TTAINT) are G5 motif.

Belongs to the G-alpha family. G(12) subfamily. G proteins are composed of 3 units; alpha, beta and gamma. The alpha chain contains the guanine nucleotide binding site. Interacts with UBXD5. Interacts with HAX1. Interacts (in GTP-bound form) with PPP5C (via TPR repeats); activates PPP5C phosphatase activity and translocates PPP5C to the cell membrane. Interacts with RGS22. Interacts with ARHGEF1. Interacts (in GTP-bound form) with ARHGEF11 (via RGS domain). Interacts (in GTP-bound form) with ARHGEF12 (via RGS domain). Interacts (in GTP-bound form) with CTNND1. Interacts with GAS2L2. Interacts with GPR35. Interacts with GPR174. In terms of processing, palmitoylation is critical for proper membrane localization and signaling. Phosphorylation on Thr-203 by PKA destabilizes the heterotrimer of alpha, beta and gamma, and inhibits Rho activation.

It localises to the membrane. Its subcellular location is the melanosome. The protein resides in the cytoplasm. The protein localises to the nucleus. Guanine nucleotide-binding proteins (G proteins) are involved as modulators or transducers in various transmembrane signaling systems. Activates effector molecule RhoA by binding and activating RhoGEFs (ARHGEF1/p115RhoGEF, ARHGEF11/PDZ-RhoGEF and ARHGEF12/LARG). GNA13-dependent Rho signaling subsequently regulates transcription factor AP-1 (activating protein-1). Promotes tumor cell invasion and metastasis by activating RhoA/ROCK signaling pathway. Inhibits CDH1-mediated cell adhesion in process independent from Rho activation. In lymphoid follicles, transmits P2RY8- and S1PR2-dependent signals that lead to inhibition of germinal center (GC) B cell growth and migration outside the GC niche. This Rattus norvegicus (Rat) protein is Guanine nucleotide-binding protein subunit alpha-13 (Gna13).